Reading from the N-terminus, the 66-residue chain is Large ribosomal subunit protein bL33c (66 aa).

Belongs to the bacterial ribosomal protein bL33 family.

It localises to the plastid. It is found in the chloroplast. The polypeptide is Large ribosomal subunit protein bL33c (Cycas taitungensis (Prince sago)).